The following is a 1664-amino-acid chain: MYND-type zinc finger-containing chromatin reader Zmynd8 (1664 aa).

3 stretches are compositionally biased toward low complexity: residues 1 to 16 (MEST…SLKS), 30 to 40 (SPQPQLQSSSL), and 61 to 84 (SAPP…INVG). Disordered stretches follow at residues 1 to 84 (MEST…INVG), 251 to 271 (SLSN…LRSE), and 295 to 323 (LALN…KTPE). The span at 258 to 271 (NDDKGPRRSNLRSE) shows a compositional bias: basic and acidic residues. Residues 296–308 (ALNTSGEGESSLF) show a composition bias toward polar residues. Residues 309–320 (SDASDTKTTTAK) show a composition bias toward low complexity. The PHD-type zinc finger occupies 343-389 (DPFCWKCRGCGKLMPCSKCLRSFHSYCVRPATTKFDSSWKCPECQVI). Zn(2+)-binding residues include C346, C349, C358, C361, H366, C369, C383, and C386. A Bromo domain is found at 401–504 (VSVDLLSQLL…KVCRQEANEI (104 aa)). C507, C510, and C525 together coordinate Zn(2+). Residues 528–579 (PHLLLWAKLKGFPYWPAKAMGSSNSTLVNVRFFGKHDRAFVPVKDCFLYSAQ) enclose the PWWP domain. Disordered stretches follow at residues 672-693 (KTKA…KKLS), 747-815 (ESVE…QNEN), 857-905 (KIPR…RQQE), and 919-1139 (TEVM…TNTS). The segment covering 676–690 (TESGNESDQSPSPTK) has biased composition (polar residues). The span at 775-784 (HKRKSKHARK) shows a compositional bias: basic residues. Over residues 785–800 (QHDNQDNQIEEAEKTG) the composition is skewed to basic and acidic residues. Pro residues predominate over residues 874–884 (IPLPTAPPPKQ). Positions 935 to 952 (PANQPQTDQVPLQQETIT) are enriched in polar residues. A compositionally biased stretch (low complexity) spans 953-962 (AQPESQMPAA). Residues 1006–1019 (PPMPLPMPPPPPLP) show a composition bias toward pro residues. The segment covering 1037 to 1053 (TTIQRVSQKQGGKSTDT) has biased composition (polar residues). The span at 1073 to 1097 (SPTHSPLLSTAPSPSASPKPTSTLA) shows a compositional bias: low complexity. Residues C1399, C1402, C1410, C1411, C1417, C1421, H1429, and C1433 each contribute to the Zn(2+) site. The MYND-type zinc-finger motif lies at 1399–1433 (CANCMREAQLYCCWNTSYCDYPCQQLHWPGHSATC). The segment at 1613–1648 (VPKATGRSGKNNSRMRQTYSNNINNSNPQGMRCNNN) is disordered. Residues 1620–1648 (SGKNNSRMRQTYSNNINNSNPQGMRCNNN) show a composition bias toward polar residues.

Its subcellular location is the nucleus. It localises to the chromosome. In terms of biological role, chromatin reader that recognizes specific histone signatures to regulate transcription. Plays a role in neuronal development. This chain is MYND-type zinc finger-containing chromatin reader Zmynd8, found in Drosophila melanogaster (Fruit fly).